The sequence spans 271 residues: Small ribosomal subunit protein uS2 (271 aa).

Residues 235–271 (FDAKNPLKPQNYNAPNKRPYQDSPRKPSYQNQNQNQI) form a disordered region. Polar residues predominate over residues 262–271 (SYQNQNQNQI).

Belongs to the universal ribosomal protein uS2 family.

The sequence is that of Small ribosomal subunit protein uS2 from Onion yellows phytoplasma (strain OY-M).